A 255-amino-acid chain; its full sequence is 4-diphosphocytidyl-2-C-methyl-D-erythritol kinase (255 aa).

Lys6 is an active-site residue. 95–105 (PVCAGLGGGSS) is a binding site for ATP. The active site involves Asp137.

This sequence belongs to the GHMP kinase family. IspE subfamily.

It catalyses the reaction 4-CDP-2-C-methyl-D-erythritol + ATP = 4-CDP-2-C-methyl-D-erythritol 2-phosphate + ADP + H(+). It functions in the pathway isoprenoid biosynthesis; isopentenyl diphosphate biosynthesis via DXP pathway; isopentenyl diphosphate from 1-deoxy-D-xylulose 5-phosphate: step 3/6. Its function is as follows. Catalyzes the phosphorylation of the position 2 hydroxy group of 4-diphosphocytidyl-2C-methyl-D-erythritol. In Campylobacter jejuni subsp. jejuni serotype O:23/36 (strain 81-176), this protein is 4-diphosphocytidyl-2-C-methyl-D-erythritol kinase.